Consider the following 98-residue polypeptide: VQ motif-containing protein 1 (98 aa).

Positions 27–36 (FKTIVQELTG) match the VQ motif.

Interacts with WRKY33.

The protein resides in the nucleus. Its function is as follows. May modulate WRKY transcription factor activities. This chain is VQ motif-containing protein 1, found in Arabidopsis thaliana (Mouse-ear cress).